A 166-amino-acid chain; its full sequence is Myeloid-derived growth factor (166 aa).

The first 24 residues, 1–24 (MAAPSGGFWTAVVLAAAALKLAAA), serve as a signal peptide directing secretion.

It belongs to the MYDGF family. In terms of tissue distribution, expressed in prostate, spleen and lung, and weakly expressed in the left ventricle (LF) and liver. Expressed predominantly in inflammatory cells, such as monocytes and macrophages, and weakly expressed in neutrophils, T-cells, B-cells, endothelial cells and cardiac myocytes, after myocardial infarction (MI) (at protein level).

The protein localises to the secreted. The protein resides in the endoplasmic reticulum-Golgi intermediate compartment. It is found in the endoplasmic reticulum. It localises to the golgi apparatus. Bone marrow-derived monocyte and paracrine-acting protein that promotes cardiac myocyte survival and adaptive angiogenesis for cardiac protection and/or repair after myocardial infarction (MI). Stimulates endothelial cell proliferation through a MAPK1/3-, STAT3- and CCND1-mediated signaling pathway. Inhibits cardiac myocyte apoptosis in a PI3K/AKT-dependent signaling pathway. In Mus musculus (Mouse), this protein is Myeloid-derived growth factor.